Here is a 155-residue protein sequence, read N- to C-terminus: Ribosomal RNA large subunit methyltransferase H (155 aa).

S-adenosyl-L-methionine is bound by residues L72, G103, and 122–127; that span reads LSTMTL.

This sequence belongs to the RNA methyltransferase RlmH family. Homodimer.

It localises to the cytoplasm. The catalysed reaction is pseudouridine(1915) in 23S rRNA + S-adenosyl-L-methionine = N(3)-methylpseudouridine(1915) in 23S rRNA + S-adenosyl-L-homocysteine + H(+). Functionally, specifically methylates the pseudouridine at position 1915 (m3Psi1915) in 23S rRNA. The polypeptide is Ribosomal RNA large subunit methyltransferase H (Nitrosomonas eutropha (strain DSM 101675 / C91 / Nm57)).